Consider the following 66-residue polypeptide: UPF0457 protein BA_2525/GBAA_2525/BAS2348 (66 aa).

The protein belongs to the UPF0457 family.

This is UPF0457 protein BA_2525/GBAA_2525/BAS2348 from Bacillus anthracis.